A 397-amino-acid polypeptide reads, in one-letter code: Argininosuccinate synthase (397 aa).

8 to 16 lines the ATP pocket; that stretch reads AYSGGLDTS. L-citrulline-binding residues include tyrosine 86 and serine 91. Position 116 (glycine 116) interacts with ATP. Residues threonine 118, asparagine 122, and aspartate 123 each contribute to the L-aspartate site. An L-citrulline-binding site is contributed by asparagine 122. Residues arginine 126, serine 175, serine 184, glutamate 260, and tyrosine 272 each contribute to the L-citrulline site.

The protein belongs to the argininosuccinate synthase family. Type 1 subfamily. Homotetramer.

It is found in the cytoplasm. The catalysed reaction is L-citrulline + L-aspartate + ATP = 2-(N(omega)-L-arginino)succinate + AMP + diphosphate + H(+). The protein operates within amino-acid biosynthesis; L-arginine biosynthesis; L-arginine from L-ornithine and carbamoyl phosphate: step 2/3. In Clostridium botulinum (strain Okra / Type B1), this protein is Argininosuccinate synthase.